A 992-amino-acid chain; its full sequence is Sorting nexin-19 (992 aa).

In terms of domain architecture, PXA spans 95 to 272; that stretch reads ERQLEREINR…VLVGIFSKAR (178 aa). The tract at residues 410–442 is disordered; sequence ALEPKDGEASEGAEAEEGPGTETETGLPVSTLN. Positions 418–428 are enriched in acidic residues; the sequence is ASEGAEAEEGP. The PX domain occupies 533 to 663; the sequence is LRITGTITAR…EFLALNTDAR (131 aa). The a 1,2-diacyl-sn-glycero-3-phospho-(1D-myo-inositol-3-phosphate) site is built by arginine 582 and arginine 629. 3 disordered regions span residues 692 to 726, 778 to 797, and 973 to 992; these read FPRSEPQSPTEELSEAETESKPQTEGKKASKSRLR, QPTKAPEKDPEQPPKGRVDS, and AATTSASDTPGNSKRMGVSS. Composition is skewed to basic and acidic residues over residues 709 to 719 and 782 to 795; these read TESKPQTEGKK and APEKDPEQPPKGRV. Over residues 980–992 the composition is skewed to polar residues; it reads DTPGNSKRMGVSS.

This sequence belongs to the sorting nexin family. In terms of assembly, interacts with PTPRN.

Its subcellular location is the early endosome membrane. It is found in the cytoplasmic vesicle membrane. Its function is as follows. Plays a role in intracellular vesicle trafficking and exocytosis. May play a role in maintaining insulin-containing dense core vesicles in pancreatic beta-cells and in preventing their degradation. May play a role in insulin secretion. Interacts with membranes containing phosphatidylinositol 3-phosphate (PtdIns(3P)). The chain is Sorting nexin-19 (SNX19) from Homo sapiens (Human).